Here is a 651-residue protein sequence, read N- to C-terminus: Probable endo-1,3(4)-beta-glucanase NFIA_089530 (651 aa).

Residues 1 to 21 (MAPSSLFLSVGSLIASSLVSA) form the signal peptide. The GH16 domain occupies 36 to 289 (ESWQGESFIN…WAGNVFAEST (254 aa)). Asn64 carries an N-linked (GlcNAc...) asparagine glycan. The active-site Nucleophile is the Glu145. The active-site Proton donor is Glu150. An N-linked (GlcNAc...) asparagine glycan is attached at Asn200. Residues 364 to 378 (PVPAETTAVPQPAQT) are compositionally biased toward low complexity. Disordered stretches follow at residues 364-422 (PVPA…ESTS) and 508-557 (SEIP…PVPA). Polar residues-rich tracts occupy residues 379-400 (NTVA…TTVP) and 520-535 (QAVS…TAQG). Over residues 542–557 (SIASASAAPSTIPVPA) the composition is skewed to low complexity. Asn629 is lipidated: GPI-anchor amidated asparagine. Positions 630–651 (GANRMSVGLSGLIGVMFIAALA) are cleaved as a propeptide — removed in mature form.

Belongs to the glycosyl hydrolase 16 family.

Its subcellular location is the cell membrane. It catalyses the reaction Endohydrolysis of (1-&gt;3)- or (1-&gt;4)-linkages in beta-D-glucans when the glucose residue whose reducing group is involved in the linkage to be hydrolyzed is itself substituted at C-3.. In terms of biological role, mixed-linked glucanase involved in the degradation of complex natural cellulosic substrates. The sequence is that of Probable endo-1,3(4)-beta-glucanase NFIA_089530 from Neosartorya fischeri (strain ATCC 1020 / DSM 3700 / CBS 544.65 / FGSC A1164 / JCM 1740 / NRRL 181 / WB 181) (Aspergillus fischerianus).